The primary structure comprises 803 residues: Palmitoyl thioesterase CPT1C (803 aa).

Residues 1–52 lie on the Cytoplasmic side of the membrane; it reads MAEAHQAVGFRPSLTSDGAEVELSAPVLQEIYLSGLRSWKRHLSRFWNDFLT. Residues 53–75 form a helical membrane-spanning segment; that stretch reads GVFPASPLSWLFLFSAIQLAWFL. Residues 76 to 103 are Lumenal-facing; that stretch reads QLDPSLGLMEKIKELLPDWGGQHHGLRG. The helical transmembrane segment at 104-126 threads the bilayer; sequence VLAAALFASCLWGALIFTLHVAL. Over 127 to 803 the chain is Cytoplasmic; the sequence is RLLLSYHGWL…SKASMTSTDF (677 aa). Histidine 470 acts as the Proton acceptor in catalysis. 552-564 contacts CoA; that stretch reads GKSFIRRCHLSSD. (R)-carnitine contacts are provided by tyrosine 586, serine 588, and threonine 599. The tract at residues 761-803 is required for interaction with GRIA1; the sequence is LFQAGQHFKRRFRGSGKENSRHRCGFLSRQTGASKASMTSTDF. Residues 772-803 form a disordered region; it reads FRGSGKENSRHRCGFLSRQTGASKASMTSTDF. Polar residues predominate over residues 788 to 803; it reads SRQTGASKASMTSTDF.

It belongs to the carnitine/choline acetyltransferase family. Peripherally associated with AMPAR complex. AMPAR complex consists of an inner core made of 4 pore-forming GluA/GRIA proteins (GRIA1, GRIA2, GRIA3 and GRIA4) and 4 major auxiliary subunits arranged in a twofold symmetry. One of the two pairs of distinct binding sites is occupied either by CNIH2, CNIH3 or CACNG2, CACNG3. The other harbors CACNG2, CACNG3, CACNG4, CACNG8 or GSG1L. This inner core of AMPAR complex is complemented by outer core constituents binding directly to the GluA/GRIA proteins at sites distinct from the interaction sites of the inner core constituents. Outer core constituents include at least PRRT1, PRRT2, CKAMP44/SHISA9, FRRS1L and NRN1. The proteins of the inner and outer core serve as a platform for other, more peripherally associated AMPAR constituents, including CPT1C. Alone or in combination, these auxiliary subunits control the gating and pharmacology of the AMPAR complex and profoundly impact their biogenesis and protein processing. Interacts with SACM1L; the interaction regulates SACM1L phosphatidylinositol-3-phosphatase activity and translocation to endoplasmic reticulum/trans Golgi network in a malonyl-CoA dependent manner. Interacts with ATL1. In terms of tissue distribution, expressed predominantly in brain and testis. Expressed in motor neurons.

It localises to the cell projection. Its subcellular location is the dendrite. The protein localises to the axon. It is found in the endoplasmic reticulum membrane. The enzyme catalyses S-hexadecanoyl-L-cysteinyl-[protein] + H2O = L-cysteinyl-[protein] + hexadecanoate + H(+). Functionally, palmitoyl thioesterase specifically expressed in the endoplasmic reticulum of neurons. Modulates the trafficking of the glutamate receptor, AMPAR, to plasma membrane through depalmitoylation of GRIA1. Also regulates AMPR trafficking through the regulation of SACM1L phosphatidylinositol-3-phosphatase activity by interaction in a malonyl-CoA dependent manner. Binds malonyl-CoA and couples malonyl-CoA to ceramide levels, necessary for proper spine maturation and contributing to systemic energy homeostasis and appetite control. Binds to palmitoyl-CoA, but does not have carnitine palmitoyltransferase 1 catalytic activity or at very low levels. The protein is Palmitoyl thioesterase CPT1C of Homo sapiens (Human).